The following is a 505-amino-acid chain: MSAKIKADEISAIIKERIENFDLSVDVEETGKVISVADGVANVYGLKNIMAGEMVEFEGGEKGMALNLEESSVGIVILGKTSGITEGSSVKRLKKLLRVPVGDALIGRVVNSLGEPIDAKGPIEATETRFVEEKAKGIMARKSVHEPLQTGIKAIDALVPIGRGQRELIIGDRQTGKTTVAIDTIINQKGQDVICIYVAIGQKQSTVAQVVKKLEEYGAMDYTIVVNAGASDTAALQYLAPYAGVTMGEYFRDNSRHALIIYDDLSKHAVAYREMSLILRRPPGREAYPGDVFYLHSRLLERASKLNDALGAGSLTALPIIETQAGDVSAYIPTNVISITDGQIFLESDLFNSGIRPAINVGLSVSRVGGAAQIKATKQVSGNLRLDLAQYRELQAFAQFASDLDESSRKQLERGQKMVEVLKQPPYSPLPVENQVVIIFAGSKGYLDDIAAASVTKFEAELYPYIEAKYPEIFEQIRTKKVLDKEIEELLHKALKDFKATFSVA.

Residue 171–178 (GDRQTGKT) coordinates ATP.

Belongs to the ATPase alpha/beta chains family. As to quaternary structure, F-type ATPases have 2 components, CF(1) - the catalytic core - and CF(0) - the membrane proton channel. CF(1) has five subunits: alpha(3), beta(3), gamma(1), delta(1), epsilon(1). CF(0) has three main subunits: a(1), b(2) and c(9-12). The alpha and beta chains form an alternating ring which encloses part of the gamma chain. CF(1) is attached to CF(0) by a central stalk formed by the gamma and epsilon chains, while a peripheral stalk is formed by the delta and b chains.

It is found in the cell inner membrane. It catalyses the reaction ATP + H2O + 4 H(+)(in) = ADP + phosphate + 5 H(+)(out). Functionally, produces ATP from ADP in the presence of a proton gradient across the membrane. The alpha chain is a regulatory subunit. This Campylobacter curvus (strain 525.92) protein is ATP synthase subunit alpha.